The primary structure comprises 201 residues: FMN-dependent NADH:quinone oxidoreductase (201 aa).

Residues serine 10, 16–18 (SQS), 96–99 (MYNF), and 140–143 (SRGG) contribute to the FMN site.

This sequence belongs to the azoreductase type 1 family. As to quaternary structure, homodimer. The cofactor is FMN.

The catalysed reaction is 2 a quinone + NADH + H(+) = 2 a 1,4-benzosemiquinone + NAD(+). It catalyses the reaction N,N-dimethyl-1,4-phenylenediamine + anthranilate + 2 NAD(+) = 2-(4-dimethylaminophenyl)diazenylbenzoate + 2 NADH + 2 H(+). Functionally, quinone reductase that provides resistance to thiol-specific stress caused by electrophilic quinones. In terms of biological role, also exhibits azoreductase activity. Catalyzes the reductive cleavage of the azo bond in aromatic azo compounds to the corresponding amines. The sequence is that of FMN-dependent NADH:quinone oxidoreductase from Cronobacter sakazakii (strain ATCC BAA-894) (Enterobacter sakazakii).